Consider the following 155-residue polypeptide: S-ribosylhomocysteine lyase (155 aa).

Fe cation-binding residues include histidine 58, histidine 62, and cysteine 125.

It belongs to the LuxS family. As to quaternary structure, homodimer. Fe cation is required as a cofactor.

It carries out the reaction S-(5-deoxy-D-ribos-5-yl)-L-homocysteine = (S)-4,5-dihydroxypentane-2,3-dione + L-homocysteine. Involved in the synthesis of autoinducer 2 (AI-2) which is secreted by bacteria and is used to communicate both the cell density and the metabolic potential of the environment. The regulation of gene expression in response to changes in cell density is called quorum sensing. Catalyzes the transformation of S-ribosylhomocysteine (RHC) to homocysteine (HC) and 4,5-dihydroxy-2,3-pentadione (DPD). The sequence is that of S-ribosylhomocysteine lyase from Helicobacter pylori (strain HPAG1).